The following is a 111-amino-acid chain: GLQLTSPLLTAWWFLACSTNMALPPTINLSGELTLITSLFSWLDITVFLTGLSAFATTTYTLYMFSSTQQGTLPPNIKPSSPSQTREHFLMLLHLLPSAGLATNPKLTAPQ.

The chain crosses the membrane as a helical span at residues 35-55 (LITSLFSWLDITVFLTGLSAF).

The protein belongs to the complex I subunit 4 family.

The protein localises to the mitochondrion membrane. It catalyses the reaction a ubiquinone + NADH + 5 H(+)(in) = a ubiquinol + NAD(+) + 4 H(+)(out). In terms of biological role, core subunit of the mitochondrial membrane respiratory chain NADH dehydrogenase (Complex I) that is believed to belong to the minimal assembly required for catalysis. Complex I functions in the transfer of electrons from NADH to the respiratory chain. The immediate electron acceptor for the enzyme is believed to be ubiquinone. This chain is NADH-ubiquinone oxidoreductase chain 4 (MT-ND4), found in Caiman crocodilus (Spectacled caiman).